Here is a 255-residue protein sequence, read N- to C-terminus: Type III pantothenate kinase (255 aa).

6-13 lines the ATP pocket; that stretch reads DVGNTNTV. Substrate-binding positions include tyrosine 100 and 107 to 110; that span reads GADR. The Proton acceptor role is filled by aspartate 109. Aspartate 129 contributes to the K(+) binding site. Residue threonine 132 participates in ATP binding. Substrate is bound at residue threonine 184.

It belongs to the type III pantothenate kinase family. Homodimer. Requires NH4(+) as cofactor. K(+) serves as cofactor.

The protein localises to the cytoplasm. It catalyses the reaction (R)-pantothenate + ATP = (R)-4'-phosphopantothenate + ADP + H(+). It participates in cofactor biosynthesis; coenzyme A biosynthesis; CoA from (R)-pantothenate: step 1/5. Functionally, catalyzes the phosphorylation of pantothenate (Pan), the first step in CoA biosynthesis. This Syntrophomonas wolfei subsp. wolfei (strain DSM 2245B / Goettingen) protein is Type III pantothenate kinase.